The chain runs to 314 residues: Probable cell division protein WhiA (314 aa).

Residues Ser274–Asn308 constitute a DNA-binding region (H-T-H motif).

The protein belongs to the WhiA family.

Involved in cell division and chromosome segregation. The protein is Probable cell division protein WhiA of Staphylococcus aureus (strain Mu3 / ATCC 700698).